Here is a 1366-residue protein sequence, read N- to C-terminus: Protein HUA2-LIKE 2 (1366 aa).

The region spanning 24 to 81 (VGDLVLAKVKGFPAWPAVVSEPEKWDASPDSKKVFVHFFGTQQIAFCNPGDVEAFTEE) is the PWWP domain. The span at 111 to 124 (LKQQERASDPKSAE) shows a compositional bias: basic and acidic residues. Disordered stretches follow at residues 111–138 (LKQQ…TLMP), 203–319 (TYSS…SGSK), 384–403 (NVQT…CEEN), 427–451 (EANS…AQTS), and 787–808 (SESA…TGEK). Residues 213–252 (VRSQNCAPQNETCPVQRSKSPSRLQTEKLQSSMLQNSDGG) are compositionally biased toward polar residues. The segment covering 391 to 403 (SHEKFTERPCEEN) has biased composition (basic and acidic residues). Residues 787–803 (SESANDMQNNSSGSPNI) show a composition bias toward polar residues. Residues 836 to 977 (DVQSTRESYE…HHIRELDSHS (142 aa)) enclose the CID domain. 2 disordered regions span residues 1027-1076 (LKDE…TAER) and 1128-1366 (TSHQ…QRSD). Residues 1032–1052 (GGSDSEGGCDSEGGSDSDGGD) show a composition bias toward acidic residues. Residues 1057-1066 (TPEHESRILE) show a composition bias toward basic and acidic residues. A compositionally biased stretch (pro residues) spans 1138–1152 (PPLPSSSPPPPPAPP). Polar residues predominate over residues 1191–1223 (LSGSTMHYQGPESSYISGVQLTNSIPQADGSNF). A compositionally biased stretch (pro residues) spans 1229–1244 (PSHPHPHPPPPPPPPQ). Basic and acidic residues-rich tracts occupy residues 1251–1262 (EPGHVLKSHRDA) and 1275–1298 (CDER…RDNW). Residues 1299–1309 (RYPPSSSYGSR) are compositionally biased toward low complexity.

In terms of tissue distribution, expressed throughout young primordia, and vegetative and reproductive apices.

It is found in the nucleus. Functionally, probable transcription factor that acts with partial redundancy with HULK1 and HULK3. Plays diverse and essential roles in the control of plant development, physiology and flowering time. The sequence is that of Protein HUA2-LIKE 2 from Arabidopsis thaliana (Mouse-ear cress).